The following is a 218-amino-acid chain: Methylthioribulose-1-phosphate dehydratase (218 aa).

Zn(2+)-binding residues include histidine 107 and histidine 109.

This sequence belongs to the aldolase class II family. MtnB subfamily. Requires Zn(2+) as cofactor.

It catalyses the reaction 5-(methylsulfanyl)-D-ribulose 1-phosphate = 5-methylsulfanyl-2,3-dioxopentyl phosphate + H2O. Its pathway is amino-acid biosynthesis; L-methionine biosynthesis via salvage pathway; L-methionine from S-methyl-5-thio-alpha-D-ribose 1-phosphate: step 2/6. Its function is as follows. Catalyzes the dehydration of methylthioribulose-1-phosphate (MTRu-1-P) into 2,3-diketo-5-methylthiopentyl-1-phosphate (DK-MTP-1-P). In Xylella fastidiosa (strain 9a5c), this protein is Methylthioribulose-1-phosphate dehydratase.